Consider the following 165-residue polypeptide: Ubiquitin-fold modifier-conjugating enzyme 1 (165 aa).

C116 acts as the Glycyl thioester intermediate in catalysis.

This sequence belongs to the ubiquitin-conjugating enzyme family. UFC1 subfamily.

E2-like enzyme which forms an intermediate with UFM1 via a thioester linkage. This Drosophila mojavensis (Fruit fly) protein is Ubiquitin-fold modifier-conjugating enzyme 1.